A 285-amino-acid polypeptide reads, in one-letter code: RNA 5'-monophosphate methyltransferase (285 aa).

Residues R46, N77, D111, D136–I137, and M165 contribute to the S-adenosyl-L-methionine site. Residues E53–P275 form the Bin3-type SAM domain.

Belongs to the methyltransferase superfamily. Interacts with DICER1; the interaction may be mediated by RNA.

The protein localises to the cytoplasm. It carries out the reaction a 5'-end 5'-phospho-ribonucleoside-RNA + S-adenosyl-L-methionine = a 5'-end (5'-methylphospho)-ribonucleoside-RNA + S-adenosyl-L-homocysteine. The enzyme catalyses a 5'-end 5'-phospho-ribonucleoside-RNA + 2 S-adenosyl-L-methionine = a 5'-end (5'-bismethylphospho)-ribonucleoside-RNA + 2 S-adenosyl-L-homocysteine. O-methyltransferase that specifically monomethylates 5'-monophosphate of cytoplasmic histidyl tRNA (tRNA(His)), acting as a capping enzyme by protecting tRNA(His) from cleavage by DICER1. Also able, with less efficiently, to methylate the 5' monophosphate of a subset of pre-miRNAs, acting as a negative regulator of miRNA processing. The 5' monophosphate of pre-miRNAs is recognized by DICER1 and is required for pre-miRNAs processing: methylation at this position reduces the processing of pre-miRNAs by DICER1. Was also reported to mediate dimethylation of pre-miR-145; however dimethylation cannot be reproduced by another group which observes a monomethylation of pre-miR-145. This chain is RNA 5'-monophosphate methyltransferase, found in Mus musculus (Mouse).